A 177-amino-acid polypeptide reads, in one-letter code: ATP synthase subunit delta (177 aa).

This sequence belongs to the ATPase delta chain family. F-type ATPases have 2 components, F(1) - the catalytic core - and F(0) - the membrane proton channel. F(1) has five subunits: alpha(3), beta(3), gamma(1), delta(1), epsilon(1). F(0) has three main subunits: a(1), b(2) and c(10-14). The alpha and beta chains form an alternating ring which encloses part of the gamma chain. F(1) is attached to F(0) by a central stalk formed by the gamma and epsilon chains, while a peripheral stalk is formed by the delta and b chains.

The protein localises to the cell inner membrane. In terms of biological role, f(1)F(0) ATP synthase produces ATP from ADP in the presence of a proton or sodium gradient. F-type ATPases consist of two structural domains, F(1) containing the extramembraneous catalytic core and F(0) containing the membrane proton channel, linked together by a central stalk and a peripheral stalk. During catalysis, ATP synthesis in the catalytic domain of F(1) is coupled via a rotary mechanism of the central stalk subunits to proton translocation. Functionally, this protein is part of the stalk that links CF(0) to CF(1). It either transmits conformational changes from CF(0) to CF(1) or is implicated in proton conduction. This is ATP synthase subunit delta from Psychromonas ingrahamii (strain DSM 17664 / CCUG 51855 / 37).